A 395-amino-acid polypeptide reads, in one-letter code: Vascular endothelial growth factor A, long form (395 aa).

Disordered regions lie at residues methionine 1–valine 45 and glutamate 73–glycine 175. Residues glutamate 73–serine 85 show a composition bias toward low complexity. Residues glutamine 91 to glutamate 102 are compositionally biased toward acidic residues. 2 stretches are compositionally biased toward low complexity: residues alanine 123 to serine 143 and arginine 165 to glycine 175. Cystine bridges form between cysteine 232/cysteine 274, cysteine 263/cysteine 308, and cysteine 267/cysteine 310. Residue asparagine 281 is glycosylated (N-linked (GlcNAc...) asparagine). Residues lysine 314–serine 323 are compositionally biased toward basic and acidic residues. Residues lysine 314–serine 344 are disordered. The span at valine 324–tyrosine 340 shows a compositional bias: basic residues.

Belongs to the PDGF/VEGF growth factor family. In terms of assembly, homodimer; disulfide-linked. Also found as heterodimer with PGF. Interacts with NRP1. Interacts with isoform 2 of BSG. Interacts with CD82; this interaction inhibits VEGFA-mediated signaling pathway. In terms of processing, produced by use of an alternative upstream CUG codon and post-translationally processed into the N-terminal N-VEGF form and the C-terminal secreted VEGFA form. As to expression, higher expression in pituitary tumors than the pituitary gland. In terms of tissue distribution, widely expressed. Not widely expressed.

The protein resides in the cytoplasm. It localises to the nucleus. Its subcellular location is the secreted. The protein localises to the endoplasmic reticulum. It is found in the golgi apparatus. The protein resides in the extracellular space. It localises to the extracellular matrix. Functionally, participates in the induction of key genes involved in the response to hypoxia and in the induction of angiogenesis such as HIF1A. Involved in protecting cells from hypoxia-mediated cell death. In terms of biological role, growth factor active in angiogenesis, vasculogenesis and endothelial cell growth. Induces endothelial cell proliferation, promotes cell migration, inhibits apoptosis and induces permeabilization of blood vessels. Binds to the FLT1/VEGFR1 and KDR/VEGFR2 receptors, heparan sulfate and heparin. Binds to the NRP1/neuropilin-1 receptor. Binding to NRP1 initiates a signaling pathway needed for motor neuron axon guidance and cell body migration, including for the caudal migration of facial motor neurons from rhombomere 4 to rhombomere 6 during embryonic development. Also binds the DEAR/FBXW7-AS1 receptor. Binds to the KDR receptor but does not activate downstream signaling pathways, does not activate angiogenesis and inhibits tumor growth. In Homo sapiens (Human), this protein is Vascular endothelial growth factor A, long form (VEGFA).